Consider the following 210-residue polypeptide: Ion-translocating oxidoreductase complex subunit G (210 aa).

A helical transmembrane segment spans residues 9–29 (GVTLAVFAAITTGLTAVINAV). Position 175 is an FMN phosphoryl threonine (T175).

This sequence belongs to the RnfG family. In terms of assembly, the complex is composed of six subunits: RnfA, RnfB, RnfC, RnfD, RnfE and RnfG. It depends on FMN as a cofactor.

The protein resides in the cell inner membrane. Functionally, part of a membrane-bound complex that couples electron transfer with translocation of ions across the membrane. The polypeptide is Ion-translocating oxidoreductase complex subunit G (Erwinia tasmaniensis (strain DSM 17950 / CFBP 7177 / CIP 109463 / NCPPB 4357 / Et1/99)).